Reading from the N-terminus, the 585-residue chain is MDSSTANSSGTAISKAEWKPDQSSLECNDCQLPFTLIRRRHHCRKCGSIFCDSCSSFYSILPIEYGYTGQQRLCRSCNNSFEQKKQYFETDALVAQFQLRSTAQFEYSKPLQDIGHTKHGLRKSYCMAKNSMGGGEECVVSIITPTPSSCPWSMSNEKKKRKFEKTLLSLKHPYILTPINVEVSGANDKILVIRTFFKQGSLRDQVYKSKPLSPYDTKYIYKQPKSSSSSSSSSSSSSQSQSVLPIKSIQKYCKQILESLLYLKSKGIQFSHLHLSNILINQSNDTCQLVDIENCLLGMKPLFNDYIYGIGLPQSFKDNLEVICFGHCLFEMIIGIPLGDHSNINSFIPLFPDKVFLLLQQIFSEKTPTLEELVKNPWFEVTTTIEQQSLQNGKLKKSQLTFIKDNSNKFESPKVSLSGSFSSSNISKLSSSSSNNNSNNNNNNNNNSNTFNNISSNDDKRKSMKLPSSTSLLNNSFNLSNNNNPSSPSTSTISPNSSLISSPPKTPILQTFTPPPPPPPPKSAPPPPPPPSSSKLPPSSSSRNSLLESIRNADNAKKLKKTTPNTKPKSSIGPHSLKPSSTKKK.

An FYVE-type zinc finger spans residues 21–82; the sequence is DQSSLECNDC…LCRSCNNSFE (62 aa). Zn(2+) contacts are provided by C27, C30, C43, C46, C51, C54, C74, and C77. The Protein kinase domain maps to 108–478; sequence SKPLQDIGHT…STSLLNNSFN (371 aa). 2 stretches are compositionally biased toward low complexity: residues 426-456 and 466-503; these read ISKL…NISS and LPSS…ISSP. A disordered region spans residues 426–585; sequence ISKLSSSSSN…SLKPSSTKKK (160 aa). The span at 513 to 532 shows a compositional bias: pro residues; sequence TPPPPPPPPKSAPPPPPPPS. The segment covering 533-542 has biased composition (low complexity); the sequence is SSKLPPSSSS. In terms of domain architecture, WH2 spans 542–562; it reads SRNSLLESIRNADNAKKLKKT.

It belongs to the protein kinase superfamily. Ser/Thr protein kinase family.

The polypeptide is Probable inactive serine/threonine-protein kinase slob1 (slob1) (Dictyostelium discoideum (Social amoeba)).